The following is a 397-amino-acid chain: Exodeoxyribonuclease 7 large subunit (397 aa).

This sequence belongs to the XseA family. As to quaternary structure, heterooligomer composed of large and small subunits.

It is found in the cytoplasm. The enzyme catalyses Exonucleolytic cleavage in either 5'- to 3'- or 3'- to 5'-direction to yield nucleoside 5'-phosphates.. Bidirectionally degrades single-stranded DNA into large acid-insoluble oligonucleotides, which are then degraded further into small acid-soluble oligonucleotides. In Anaplasma marginale (strain St. Maries), this protein is Exodeoxyribonuclease 7 large subunit.